Consider the following 397-residue polypeptide: 1-deoxy-D-xylulose 5-phosphate reductoisomerase (397 aa).

8 residues coordinate NADPH: Thr-12, Gly-13, Ser-14, Ile-15, Gly-38, Lys-39, Asn-40, and Asn-126. A 1-deoxy-D-xylulose 5-phosphate-binding site is contributed by Lys-127. Residue Glu-128 participates in NADPH binding. Asp-152 is a binding site for Mn(2+). Ser-153, Glu-154, Ser-188, and His-211 together coordinate 1-deoxy-D-xylulose 5-phosphate. A Mn(2+)-binding site is contributed by Glu-154. Gly-217 is an NADPH binding site. Positions 224, 229, 230, and 233 each coordinate 1-deoxy-D-xylulose 5-phosphate. Glu-233 provides a ligand contact to Mn(2+).

It belongs to the DXR family. Requires Mg(2+) as cofactor. It depends on Mn(2+) as a cofactor.

The catalysed reaction is 2-C-methyl-D-erythritol 4-phosphate + NADP(+) = 1-deoxy-D-xylulose 5-phosphate + NADPH + H(+). It functions in the pathway isoprenoid biosynthesis; isopentenyl diphosphate biosynthesis via DXP pathway; isopentenyl diphosphate from 1-deoxy-D-xylulose 5-phosphate: step 1/6. Its function is as follows. Catalyzes the NADPH-dependent rearrangement and reduction of 1-deoxy-D-xylulose-5-phosphate (DXP) to 2-C-methyl-D-erythritol 4-phosphate (MEP). In Haemophilus influenzae (strain ATCC 51907 / DSM 11121 / KW20 / Rd), this protein is 1-deoxy-D-xylulose 5-phosphate reductoisomerase.